A 1004-amino-acid chain; its full sequence is Putative helicase MOV-10 (1004 aa).

Position 148 is an N6-acetyllysine (Lys-148). The residue at position 254 (Thr-254) is a Phosphothreonine. Phosphoserine is present on Ser-433. Residue 525–532 participates in ATP binding; that stretch reads GPPGTGKT. The DEAG box motif lies at 646 to 649; the sequence is DEAG. Positions 922–966 are interaction with AGO2 and APOBEC3G; sequence NPLLLGHDPDWKTFLEFCKENGGYTGCPFPAKLDLQQGQDLLQGL. The segment at 966 to 1004 is disordered; that stretch reads LSKLSPSTSGPRRHQNLPQEREGEGGLPLQVEPEWRNEL. Ser-970 is subject to Phosphoserine.

The protein belongs to the DNA2/NAM7 helicase family. SDE3 subfamily. Interacts with DICER1, AGO2, TARBP2, EIF6 and RPL7A (60S ribosome subunit); they form a large RNA-induced silencing complex (RISC). Interacts with APOBEC3G in an RNA-dependent manner. Interacts with TRIM71 (via NHL repeats) in an RNA-dependent manner. Interacts with both protein products of LIRE1, ORF1p and ORF2p. Interacts with TUT4 and, to a lesser extent, TUT7; the interactions are RNA-dependent. Interacts with AGO2, TNRC6B and UPF1; the interactions are direct and RNA-dependent. Interacts with FMR1; this interaction is direct, occurs in an RNA-dependent manner on polysomes and induces association of MOV10 with RNAs. Interacts with SHFL; the interaction increases in presence of RNA. Interacts with DHX34; the interaction is RNA-independent. Interacts with RBM46. In terms of processing, ubiquitinated by the DCX(DCAF12) complex that specifically recognizes the glutamate-leucine (Glu-Leu) degron at the C-terminus, leading to its degradation.

It localises to the cytoplasm. Its subcellular location is the P-body. The protein localises to the nucleus. It is found in the cytoplasmic ribonucleoprotein granule. The protein resides in the stress granule. It catalyses the reaction ATP + H2O = ADP + phosphate + H(+). Functionally, 5' to 3' RNA helicase that is involved in a number of cellular roles ranging from mRNA metabolism and translation, modulation of viral infectivity, inhibition of retrotransposition, or regulation of synaptic transmission. Plays an important role in innate antiviral immunity by promoting type I interferon production. Mechanistically, specifically uses IKKepsilon/IKBKE as the mediator kinase for IRF3 activation. Contributes to UPF1 mRNA target degradation by translocation along 3' UTRs. Required for microRNA (miRNA)-mediated gene silencing by the RNA-induced silencing complex (RISC). Required for both miRNA-mediated translational repression and miRNA-mediated cleavage of complementary mRNAs by RISC. In cooperation with FMR1, regulates miRNA-mediated translational repression by AGO2. Restricts retrotransposition of long interspersed element-1 (LINE-1) in cooperation with TUT4 and TUT7 counteracting the RNA chaperonne activity of L1RE1. Facilitates LINE-1 uridylation by TUT4 and TUT7. Required for embryonic viability and for normal central nervous system development and function. Plays two critical roles in early brain development: suppresses retroelements in the nucleus by directly inhibiting cDNA synthesis, while regulates cytoskeletal mRNAs to influence neurite outgrowth in the cytosol. May function as a messenger ribonucleoprotein (mRNP) clearance factor. This chain is Putative helicase MOV-10 (Mov10), found in Mus musculus (Mouse).